Here is a 718-residue protein sequence, read N- to C-terminus: Tensin-4 (718 aa).

A signal peptide spans 1–14; it reads MSSSLLTGGHVVSL. Disordered regions lie at residues 188-244 and 272-437; these read RETR…GLRA and LPHS…AKDM. Over residues 192-207 the composition is skewed to polar residues; the sequence is SSSNESLIFSGNQGRG. Positions 208–219 are enriched in low complexity; the sequence is SSPHTPSSLSNS. Residue S230 is modified to Phosphoserine. The segment covering 272 to 304 has biased composition (low complexity); that stretch reads LPHSSLSSYPPSSRSLGSPASSSSSLHSLDRGS. Polar residues-rich tracts occupy residues 306 to 316, 337 to 349, 367 to 393, and 405 to 415; these read CVRSSDAQVPS, QASS…TNSM, PAQQ…QATK, and TSPSHLCQATK. The SH2 domain maps to 451–558; the sequence is WFKPSITREQ…ALPCKLTIPQ (108 aa). A PTB domain is found at 585 to 711; that stretch reads CHTLYLTSVS…SQVISLVTAL (127 aa).

Belongs to the PTEN phosphatase protein family. As to quaternary structure, interacts (via SH2 domain) with Rho GTPase-activating protein DLC1 (via C-terminus); the interaction is independent of DLC1 tyrosine phosphorylation. Interacts with integrin ITGB1; the interaction displaces tensin TNS3 from the ITGB1 cytoplasmic tail and promotes ITGB1 stability. Interacts (via SH2 domain) with E3 ubiquitin-protein ligase CBL (phosphorylated on 'Tyr-781'); the interaction is enhanced in the presence of EGF and reduces interaction of CBL with EGFR. Interacts (via SH2 domain) with receptor tyrosine kinase MET (when phosphorylated); the interaction increases MET protein stability.

The protein resides in the cell junction. The protein localises to the focal adhesion. It localises to the cytoplasm. It is found in the cytoskeleton. Promotes EGF-induced cell migration by displacing tensin TNS3 from the cytoplasmic tail of integrin ITGB1 which results in dissociation of TNS3 from focal adhesions, disassembly of actin stress fibers and initiation of cell migration. Suppresses ligand-induced degradation of EGFR by reducing EGFR ubiquitination in the presence of EGF. Increases MET protein stability by inhibiting MET endocytosis and subsequent lysosomal degradation which leads to increased cell survival, proliferation and migration. The protein is Tensin-4 (Tns4) of Rattus norvegicus (Rat).